The following is a 1106-amino-acid chain: Probable LRR receptor-like serine/threonine-protein kinase At1g74360 (1106 aa).

Residues 1–34 (MTMVTRVIMTDDDSQSLCFLCFLLFFFITAIAVA) form the signal peptide. Residues 35–736 (GDSLDSDREV…PRTLLLIWIS (702 aa)) lie on the Extracellular side of the membrane. LRR repeat units follow at residues 86–109 (RSRV…NFSA), 110–134 (LTEL…LSRC), 136–156 (NLKH…LPGL), 157–182 (SNLE…LFCN), 184–204 (LVVA…IFNG), 205–226 (CRNL…WTGF), and 227–250 (GRLV…MFRG). Asn-93 and Asn-106 each carry an N-linked (GlcNAc...) asparagine glycan. N-linked (GlcNAc...) asparagine glycosylation is present at Asn-141. N-linked (GlcNAc...) asparagine glycosylation is found at Asn-188 and Asn-193. Residues Asn-242 and Asn-251 are each glycosylated (N-linked (GlcNAc...) asparagine). 15 LRR repeats span residues 252–275 (CTLQ…VSNC), 276–299 (QNLN…IGSI), 300–323 (SSLK…LLNL), 325–346 (NLVF…IFGR), 348–371 (TQVK…NILK), 372–396 (LPNL…ISQI), 398–419 (SLKF…EYGN), 420–443 (MPGL…SFGK), 445–468 (TSLL…IGNC), 470–492 (SLLW…LTRM), 566–593 (VRTL…ISQM), 594–617 (DRLS…IGQL), 619–640 (LAFL…IGNL), 641–664 (KCLQ…LNDL), and 666–690 (ELSK…QVAT). Asn-309 and Asn-322 each carry an N-linked (GlcNAc...) asparagine glycan. N-linked (GlcNAc...) asparagine glycosylation is found at Asn-365, Asn-374, Asn-384, and Asn-408. Residues Asn-454 and Asn-467 are each glycosylated (N-linked (GlcNAc...) asparagine). 6 N-linked (GlcNAc...) asparagine glycosylation sites follow: Asn-623, Asn-628, Asn-652, Asn-671, Asn-709, and Asn-713. Residues 737 to 757 (LALALAFIACLVVSGIVLMVV) form a helical membrane-spanning segment. At 758–1106 (KASREAEIDL…GLSSQGYIEM (349 aa)) the chain is on the cytoplasmic side. A phosphothreonine mark is found at Thr-803 and Thr-811. Positions 814–1095 (FSEERVVGRG…VKISGKAELF (282 aa)) constitute a Protein kinase domain. ATP contacts are provided by residues 820–828 (VGRGGYGTV) and Lys-842. Catalysis depends on Asp-941, which acts as the Proton acceptor. The residue at position 983 (Tyr-983) is a Phosphotyrosine. Thr-991 carries the post-translational modification Phosphothreonine.

The protein belongs to the protein kinase superfamily. Ser/Thr protein kinase family.

Its subcellular location is the mitochondrion membrane. It carries out the reaction L-seryl-[protein] + ATP = O-phospho-L-seryl-[protein] + ADP + H(+). It catalyses the reaction L-threonyl-[protein] + ATP = O-phospho-L-threonyl-[protein] + ADP + H(+). This chain is Probable LRR receptor-like serine/threonine-protein kinase At1g74360, found in Arabidopsis thaliana (Mouse-ear cress).